Consider the following 86-residue polypeptide: Small ribosomal subunit protein bS16 (86 aa).

Belongs to the bacterial ribosomal protein bS16 family.

The polypeptide is Small ribosomal subunit protein bS16 (Methylacidiphilum infernorum (isolate V4) (Methylokorus infernorum (strain V4))).